Here is a 149-residue protein sequence, read N- to C-terminus: 3-hydroxyacyl-[acyl-carrier-protein] dehydratase FabZ (149 aa).

The active site involves H49.

The protein belongs to the thioester dehydratase family. FabZ subfamily.

It localises to the cytoplasm. It catalyses the reaction a (3R)-hydroxyacyl-[ACP] = a (2E)-enoyl-[ACP] + H2O. Involved in unsaturated fatty acids biosynthesis. Catalyzes the dehydration of short chain beta-hydroxyacyl-ACPs and long chain saturated and unsaturated beta-hydroxyacyl-ACPs. The protein is 3-hydroxyacyl-[acyl-carrier-protein] dehydratase FabZ of Sulfurimonas denitrificans (strain ATCC 33889 / DSM 1251) (Thiomicrospira denitrificans (strain ATCC 33889 / DSM 1251)).